We begin with the raw amino-acid sequence, 79 residues long: uncharacterized protein (79 aa).

This is an uncharacterized protein from Sulfolobus spindle-shape virus 1 (SSV1).